Consider the following 161-residue polypeptide: Large ribosomal subunit protein uL10 (161 aa).

This sequence belongs to the universal ribosomal protein uL10 family. Part of the ribosomal stalk of the 50S ribosomal subunit. The N-terminus interacts with L11 and the large rRNA to form the base of the stalk. The C-terminus forms an elongated spine to which L12 dimers bind in a sequential fashion forming a multimeric L10(L12)X complex.

Forms part of the ribosomal stalk, playing a central role in the interaction of the ribosome with GTP-bound translation factors. The protein is Large ribosomal subunit protein uL10 of Sulfurovum sp. (strain NBC37-1).